The sequence spans 409 residues: 23S rRNA (uracil(747)-C(5))-methyltransferase (409 aa).

Cys61, Cys67, Cys70, and Cys137 together coordinate [4Fe-4S] cluster. Gln251, Tyr277, Glu298, and Asp339 together coordinate S-adenosyl-L-methionine. Cys365 functions as the Nucleophile in the catalytic mechanism.

The protein belongs to the class I-like SAM-binding methyltransferase superfamily. RNA M5U methyltransferase family.

The catalysed reaction is uridine(747) in 23S rRNA + S-adenosyl-L-methionine = 5-methyluridine(747) in 23S rRNA + S-adenosyl-L-homocysteine + H(+). Its function is as follows. Catalyzes the formation of 5-methyl-uridine at position equivalent to 747 (m5U747) in 23S rRNA. The chain is 23S rRNA (uracil(747)-C(5))-methyltransferase from Pyrococcus furiosus (strain ATCC 43587 / DSM 3638 / JCM 8422 / Vc1).